Consider the following 135-residue polypeptide: Probable disulfide formation protein (135 aa).

A helical membrane pass occupies residues 7–26; that stretch reads SYCLYLAWLFSCIGTLMSVY. Cys-36 and Cys-39 are disulfide-bonded. 2 helical membrane-spanning segments follow: residues 41–60 and 67–84; these read YQRI…AYRE and YTLP…YQVC. Cys-96 and Cys-101 are oxidised to a cystine. A helical transmembrane segment spans residues 109-131; that stretch reads GFITMPMASAAAFCAIACLLVLA.

This sequence belongs to the DsbB family. BdbC subfamily.

The protein resides in the cell inner membrane. Its function is as follows. Required for disulfide bond formation in some proteins. This Chlamydia trachomatis serovar D (strain ATCC VR-885 / DSM 19411 / UW-3/Cx) protein is Probable disulfide formation protein.